A 500-amino-acid polypeptide reads, in one-letter code: GTPase Der (500 aa).

EngA-type G domains lie at 3-166 and 211-384; these read PVVA…MEEL and IKLA…VSAT. Residues 9–16, 56–60, 118–121, 217–224, 264–268, and 329–332 each bind GTP; these read GRPNVGKS, DTGGI, NKID, DTAGV, and NKWD. The region spanning 385 to 469 is the KH-like domain; sequence KRVGTSVLTR…PIRIQFQNSE (85 aa). The tract at residues 481–500 is disordered; sequence LSQERQRKRLVGAVKNRNKK. The span at 486 to 500 shows a compositional bias: basic residues; the sequence is QRKRLVGAVKNRNKK.

This sequence belongs to the TRAFAC class TrmE-Era-EngA-EngB-Septin-like GTPase superfamily. EngA (Der) GTPase family. In terms of assembly, associates with the 50S ribosomal subunit.

GTPase that plays an essential role in the late steps of ribosome biogenesis. This Aliivibrio salmonicida (strain LFI1238) (Vibrio salmonicida (strain LFI1238)) protein is GTPase Der.